The following is a 213-amino-acid chain: Kynurenine formamidase (213 aa).

Residue W18 coordinates substrate. Zn(2+) is bound by residues H48, H52, and D54. The active-site Proton donor/acceptor is H58. Residues H160 and E172 each contribute to the Zn(2+) site.

This sequence belongs to the Cyclase 1 superfamily. KynB family. As to quaternary structure, homodimer. Zn(2+) serves as cofactor.

It catalyses the reaction N-formyl-L-kynurenine + H2O = L-kynurenine + formate + H(+). Its pathway is amino-acid degradation; L-tryptophan degradation via kynurenine pathway; L-kynurenine from L-tryptophan: step 2/2. Functionally, catalyzes the hydrolysis of N-formyl-L-kynurenine to L-kynurenine, the second step in the kynurenine pathway of tryptophan degradation. The polypeptide is Kynurenine formamidase (Burkholderia orbicola (strain MC0-3)).